The sequence spans 529 residues: Glucose-6-phosphate isomerase (529 aa).

Residue Glu-323 is the Proton donor of the active site. Active-site residues include His-352 and Lys-456.

Belongs to the GPI family.

It is found in the cytoplasm. It carries out the reaction alpha-D-glucose 6-phosphate = beta-D-fructose 6-phosphate. Its pathway is carbohydrate biosynthesis; gluconeogenesis. The protein operates within carbohydrate degradation; glycolysis; D-glyceraldehyde 3-phosphate and glycerone phosphate from D-glucose: step 2/4. Functionally, catalyzes the reversible isomerization of glucose-6-phosphate to fructose-6-phosphate. The protein is Glucose-6-phosphate isomerase of Geobacter sulfurreducens (strain ATCC 51573 / DSM 12127 / PCA).